The primary structure comprises 276 residues: CTD small phosphatase-like protein (276 aa).

The disordered stretch occupies residues 1–25 (MDGPAIITQVTNPKEDEGRLPGAGE). The 159-residue stretch at 102–260 (LDYGKKCVVI…LDLIPFFEGL (159 aa)) folds into the FCP1 homology domain. The 4-aspartylphosphate intermediate role is filled by D112. Residues D112, D114, and N223 each contribute to the Mg(2+) site. Catalysis depends on D114, which acts as the Proton donor.

Interacts with REST. Monomer. It depends on Mg(2+) as a cofactor. Expression is restricted to non-neuronal tissues.

The protein localises to the nucleus. It carries out the reaction O-phospho-L-seryl-[protein] + H2O = L-seryl-[protein] + phosphate. The enzyme catalyses O-phospho-L-threonyl-[protein] + H2O = L-threonyl-[protein] + phosphate. Functionally, recruited by REST to neuronal genes that contain RE-1 elements, leading to neuronal gene silencing in non-neuronal cells. Preferentially catalyzes the dephosphorylation of 'Ser-5' within the tandem 7 residue repeats in the C-terminal domain (CTD) of the largest RNA polymerase II subunit POLR2A. Negatively regulates RNA polymerase II transcription, possibly by controlling the transition from initiation/capping to processive transcript elongation. The polypeptide is CTD small phosphatase-like protein (CTDSPL) (Homo sapiens (Human)).